A 236-amino-acid polypeptide reads, in one-letter code: uncharacterized protein (236 aa).

The RPE1 insert domain occupies 117 to 160; it reads RYLSKQTDRNEFITTAESYIGISKHKSTNITYKLPLKEQFCNMS.

This is an uncharacterized protein from Rickettsia prowazekii (strain Madrid E).